A 222-amino-acid polypeptide reads, in one-letter code: uncharacterized protein (222 aa).

A signal peptide spans 1 to 20; it reads MRTTSFAKVAALCGLLALSG. Residue Cys21 is the site of N-palmitoyl cysteine attachment. The S-diacylglycerol cysteine moiety is linked to residue Cys21.

It is found in the cell membrane. This is an uncharacterized protein from Escherichia coli O157:H7.